Reading from the N-terminus, the 472-residue chain is Glycerol-3-phosphate acyltransferase, chloroplastic (472 aa).

Residues 1 to 102 (MLVLSSSAPP…EIPVKKEDDN (102 aa)) constitute a chloroplast transit peptide. An HXXXXD motif motif is present at residues 241-246 (HQSEAD).

It belongs to the GPAT/DAPAT family.

Its subcellular location is the plastid. It is found in the chloroplast stroma. It catalyses the reaction sn-glycerol 3-phosphate + an acyl-CoA = a 1-acyl-sn-glycero-3-phosphate + CoA. It functions in the pathway phospholipid metabolism; CDP-diacylglycerol biosynthesis; CDP-diacylglycerol from sn-glycerol 3-phosphate: step 1/3. Its function is as follows. Esterifies acyl-group from acyl-ACP to the sn-1 position of glycerol-3-phosphate. The enzyme from chilling-resistant plants discriminates against non-fluid palmitic acid and selects oleic acid whereas the enzyme from sensitive plants accepts both fatty acids. This is an oleate-selective acyltransferase. This Spinacia oleracea (Spinach) protein is Glycerol-3-phosphate acyltransferase, chloroplastic (GAT).